Reading from the N-terminus, the 299-residue chain is Oxygen-dependent coproporphyrinogen-III oxidase (299 aa).

Residue Ser92 coordinates substrate. Positions 96 and 106 each coordinate a divalent metal cation. The Proton donor role is filled by His106. Residue 108–110 (NVR) participates in substrate binding. Residues His145 and His175 each coordinate a divalent metal cation. The interval 239 to 274 (YVEFNLVYDRGTLFGLQSGGRAESILMSLPPRVRWE) is important for dimerization. Position 257-259 (257-259 (GGR)) interacts with substrate.

This sequence belongs to the aerobic coproporphyrinogen-III oxidase family. As to quaternary structure, homodimer. It depends on a divalent metal cation as a cofactor.

Its subcellular location is the cytoplasm. It carries out the reaction coproporphyrinogen III + O2 + 2 H(+) = protoporphyrinogen IX + 2 CO2 + 2 H2O. It participates in porphyrin-containing compound metabolism; protoporphyrin-IX biosynthesis; protoporphyrinogen-IX from coproporphyrinogen-III (O2 route): step 1/1. Its function is as follows. Involved in the heme biosynthesis. Catalyzes the aerobic oxidative decarboxylation of propionate groups of rings A and B of coproporphyrinogen-III to yield the vinyl groups in protoporphyrinogen-IX. The sequence is that of Oxygen-dependent coproporphyrinogen-III oxidase from Xanthomonas oryzae pv. oryzae (strain MAFF 311018).